Reading from the N-terminus, the 114-residue chain is Non-specific lipid-transfer protein 2 (114 aa).

Residues Met-1 to Glu-23 form the signal peptide. Intrachain disulfides connect Cys-27/Cys-73, Cys-37/Cys-50, Cys-51/Cys-96, and Cys-71/Cys-110.

The protein belongs to the plant LTP family.

In terms of biological role, plant non-specific lipid-transfer proteins transfer phospholipids as well as galactolipids across membranes. May play a role in wax or cutin deposition in the cell walls of expanding epidermal cells and certain secretory tissues. The sequence is that of Non-specific lipid-transfer protein 2 (LE16) from Solanum lycopersicum (Tomato).